Here is a 230-residue protein sequence, read N- to C-terminus: MAKVGKNYQEAVKAFDRAALHEPMEALAVVKKIAKAKFDETVEVAFKLGIDTRHADQQIRGALVLPHGTGKTRSVLVFAKGDKAKEAEAAGADFVGAEDMIAKIEQGWFGFDVVVATPDMMGMVGKLGRVLGPKGLMPNPKTGTVTFDVAKAVKEIKAGKIEYRADKAGIIHAPIGKVSFSEEQLYQNYKVLVETLVKAKPAAAKGQYIRSVTVSSTMGPGVRINPVKAN.

This sequence belongs to the universal ribosomal protein uL1 family. As to quaternary structure, part of the 50S ribosomal subunit.

Its function is as follows. Binds directly to 23S rRNA. The L1 stalk is quite mobile in the ribosome, and is involved in E site tRNA release. In terms of biological role, protein L1 is also a translational repressor protein, it controls the translation of the L11 operon by binding to its mRNA. The polypeptide is Large ribosomal subunit protein uL1 (Desulfitobacterium hafniense (strain DSM 10664 / DCB-2)).